We begin with the raw amino-acid sequence, 461 residues long: Protein IQ-DOMAIN 2 (461 aa).

A disordered region spans residues 1 to 55 (MGKKAKWFSSVKKAFSPDSKKSKQKLAEGQNGVISNPPVVDNVRQSSSSPPPALA). Residues 114 to 142 (EEAAAILIQTIFRGYLARRALRAMRGLVR) form the IQ domain. A calmodulin-binding region spans residues 141–158 (VRLKLLMEGSVVKRQAAN). Residues 278-461 (PLESSEKEQS…GVTVTNGAGS (184 aa)) form a disordered region. The span at 310-345 (LTRNGSTQPNTPSSARGTPRNKNSFFSPPTPSRLNQ) shows a compositional bias: polar residues. The Nuclear localization signal motif lies at 425–432 (KKRLSYPT).

Belongs to the IQD family. Binds to multiple calmodulin (CaM) in the presence of Ca(2+) and CaM-like proteins.

Its subcellular location is the nucleus. The protein localises to the cytoplasm. It localises to the cytoskeleton. Functionally, may be involved in cooperative interactions with calmodulins or calmodulin-like proteins. Recruits calmodulin proteins to microtubules, thus being a potential scaffold in cellular signaling and trafficking. May associate with nucleic acids and regulate gene expression at the transcriptional or post-transcriptional level. This chain is Protein IQ-DOMAIN 2, found in Arabidopsis thaliana (Mouse-ear cress).